The chain runs to 245 residues: uncharacterized protein (245 aa).

The HTH gntR-type domain occupies 29-96; the sequence is RSLIEATFQR…AQRGFHVTPM (68 aa). Positions 56-75 form a DNA-binding region, H-T-H motif; that stretch reads IEDLKSRYEVSGGTVREALS.

This is an uncharacterized protein from Paraburkholderia xenovorans (strain LB400).